A 711-amino-acid polypeptide reads, in one-letter code: Polyribonucleotide nucleotidyltransferase (711 aa).

Residues D490 and D496 each contribute to the Mg(2+) site. The 60-residue stretch at 556–615 (PRIETMQVPTDKIREVIGSGGKVIREIVEVSGAKVDINDDGVIKIASANGEAIQKAYDMI) folds into the KH domain. Residues 625–693 (GAVYTGKVVK…DRGKVRLSMK (69 aa)) form the S1 motif domain.

Belongs to the polyribonucleotide nucleotidyltransferase family. Requires Mg(2+) as cofactor.

It is found in the cytoplasm. It catalyses the reaction RNA(n+1) + phosphate = RNA(n) + a ribonucleoside 5'-diphosphate. Functionally, involved in mRNA degradation. Catalyzes the phosphorolysis of single-stranded polyribonucleotides processively in the 3'- to 5'-direction. The protein is Polyribonucleotide nucleotidyltransferase of Ruegeria sp. (strain TM1040) (Silicibacter sp.).